Reading from the N-terminus, the 451-residue chain is Tubulin alpha-1 chain (451 aa).

Q11 provides a ligand contact to GTP. At K40 the chain carries N6-acetyllysine. Positions 71, 144, 145, 179, 206, and 228 each coordinate GTP. E71 serves as a coordination point for Mg(2+). The active site involves E254.

It belongs to the tubulin family. In terms of assembly, dimer of alpha and beta chains. A typical microtubule is a hollow water-filled tube with an outer diameter of 25 nm and an inner diameter of 15 nM. Alpha-beta heterodimers associate head-to-tail to form protofilaments running lengthwise along the microtubule wall with the beta-tubulin subunit facing the microtubule plus end conferring a structural polarity. Microtubules usually have 13 protofilaments but different protofilament numbers can be found in some organisms and specialized cells. It depends on Mg(2+) as a cofactor. In terms of processing, undergoes a tyrosination/detyrosination cycle, the cyclic removal and re-addition of a C-terminal tyrosine residue by the enzymes tubulin tyrosine carboxypeptidase (TTCP) and tubulin tyrosine ligase (TTL), respectively. Acetylation of alpha chains at Lys-40 stabilizes microtubules and affects affinity and processivity of microtubule motors. This modification has a role in multiple cellular functions, ranging from cell motility, cell cycle progression or cell differentiation to intracellular trafficking and signaling.

The protein localises to the cytoplasm. Its subcellular location is the cytoskeleton. The catalysed reaction is GTP + H2O = GDP + phosphate + H(+). Tubulin is the major constituent of microtubules, a cylinder consisting of laterally associated linear protofilaments composed of alpha- and beta-tubulin heterodimers. Microtubules grow by the addition of GTP-tubulin dimers to the microtubule end, where a stabilizing cap forms. Below the cap, tubulin dimers are in GDP-bound state, owing to GTPase activity of alpha-tubulin. This is Tubulin alpha-1 chain (TUBA1) from Zea mays (Maize).